We begin with the raw amino-acid sequence, 1404 residues long: DNA-directed RNA polymerase subunit beta' (1404 aa).

4 residues coordinate Zn(2+): C70, C72, C85, and C88. Mg(2+) contacts are provided by D460, D462, and D464. Zn(2+)-binding residues include C814, C888, C895, and C898.

This sequence belongs to the RNA polymerase beta' chain family. In terms of assembly, the RNAP catalytic core consists of 2 alpha, 1 beta, 1 beta' and 1 omega subunit. When a sigma factor is associated with the core the holoenzyme is formed, which can initiate transcription. The cofactor is Mg(2+). Zn(2+) serves as cofactor.

The enzyme catalyses RNA(n) + a ribonucleoside 5'-triphosphate = RNA(n+1) + diphosphate. DNA-dependent RNA polymerase catalyzes the transcription of DNA into RNA using the four ribonucleoside triphosphates as substrates. In Shewanella pealeana (strain ATCC 700345 / ANG-SQ1), this protein is DNA-directed RNA polymerase subunit beta'.